The following is a 431-amino-acid chain: Divergent protein kinase domain 1B (431 aa).

Over 1 to 30 the chain is Cytoplasmic; sequence MRRLRRLVHLVLLCPFSKGLQGRLPGLRVK. The short motif at 5–6 is the May mediate ER retention element; that stretch reads RR. Residues 31–51 traverse the membrane as a helical segment; sequence YVLLVWLGIFVGSWMVYVHYS. Over 52–431 the chain is Lumenal; the sequence is SYSELCRGHV…WREISNTNYS (380 aa). Intrachain disulfides connect Cys57–Cys94 and Cys62–Cys117.

Belongs to the DIPK family. In terms of processing, among the many cysteines in the lumenal domain, most are probably involved in disulfide bonds. In terms of tissue distribution, expressed in kidney, testis, lung, heart, stomach, intestine, pancreas, liver and salivary gland. Strongly expressed in acute pancreatitis, brain, and in peripheral endothelial cells.

Its subcellular location is the endoplasmic reticulum membrane. This chain is Divergent protein kinase domain 1B (Dipk1b), found in Mus musculus (Mouse).